Consider the following 263-residue polypeptide: Receptor-transporting protein 1 (263 aa).

At 1 to 238 (MRIFRPWRLR…QTGSGWNFCS (238 aa)) the chain is on the cytoplasmic side. The 3CxxC-type zinc finger occupies 88–197 (ASGRFHCSWC…GEFCEACQEG (110 aa)). Residues 239 to 259 (IPWCLFWATVLLLIIYLQFSF) traverse the membrane as a helical segment. Residues 260–263 (RSSV) are Extracellular-facing.

It belongs to the TMEM7 family. As to quaternary structure, interacts with olfactory receptors. In terms of tissue distribution, expressed in testis.

It is found in the cell membrane. Its function is as follows. Specifically promotes functional cell surface expression of olfactory receptors, but not of other GPCRs. The chain is Receptor-transporting protein 1 (RTP1) from Homo sapiens (Human).